We begin with the raw amino-acid sequence, 311 residues long: uncharacterized protein (311 aa).

Residues 1 to 12 (MPATDTNSTHTT) show a composition bias toward polar residues. Disordered regions lie at residues 1–44 (MPAT…DEEH) and 205–268 (ERPS…ATVH). Residues 35 to 44 (TSDKHADEEH) show a composition bias toward basic and acidic residues.

This sequence belongs to the HHV-5 HKLF1 family.

This is an uncharacterized protein from Human cytomegalovirus (strain AD169) (HHV-5).